The following is a 101-amino-acid chain: Apolipoprotein C-II (101 aa).

Positions 1–17 are cleaved as a signal peptide; that stretch reads MGTRFLLALCLVLLVLG. Residues 66–74 form a lipid binding region; sequence AVDEKLRDL. The interval 78 to 101 is lipoprotein lipase cofactor; it reads STAAMSTYTGIFTDQVLSVLKGEE.

It belongs to the apolipoprotein C2 family. Proapolipoprotein C-II is synthesized as a sialic acid containing glycoprotein which is subsequently desialylated prior to its proteolytic processing. In terms of processing, proapolipoprotein C-II, the major form found in plasma undergoes proteolytic cleavage of its N-terminal hexapeptide to generate apolipoprotein C-II, which occurs as the minor form in plasma.

It localises to the secreted. Functionally, component of chylomicrons, very low-density lipoproteins (VLDL), low-density lipoproteins (LDL), and high-density lipoproteins (HDL) in plasma. Plays an important role in lipoprotein metabolism as an activator of lipoprotein lipase. Both proapolipoprotein C-II and apolipoprotein C-II can activate lipoprotein lipase. The protein is Apolipoprotein C-II (APOC2) of Chlorocebus sabaeus (Green monkey).